The sequence spans 312 residues: Ribose-phosphate pyrophosphokinase (312 aa).

ATP contacts are provided by residues 34–36 (DLE) and 93–94 (RQ). Mg(2+)-binding residues include histidine 127 and aspartate 168. Lysine 192 is a catalytic residue. D-ribose 5-phosphate contacts are provided by residues arginine 194, aspartate 218, and 222-226 (DSAGT).

Belongs to the ribose-phosphate pyrophosphokinase family. Class I subfamily. Homohexamer. Requires Mg(2+) as cofactor.

It localises to the cytoplasm. It carries out the reaction D-ribose 5-phosphate + ATP = 5-phospho-alpha-D-ribose 1-diphosphate + AMP + H(+). Its pathway is metabolic intermediate biosynthesis; 5-phospho-alpha-D-ribose 1-diphosphate biosynthesis; 5-phospho-alpha-D-ribose 1-diphosphate from D-ribose 5-phosphate (route I): step 1/1. Involved in the biosynthesis of the central metabolite phospho-alpha-D-ribosyl-1-pyrophosphate (PRPP) via the transfer of pyrophosphoryl group from ATP to 1-hydroxyl of ribose-5-phosphate (Rib-5-P). This Caulobacter vibrioides (strain ATCC 19089 / CIP 103742 / CB 15) (Caulobacter crescentus) protein is Ribose-phosphate pyrophosphokinase.